Reading from the N-terminus, the 217-residue chain is Somatotropin (217 aa).

Residues 1 to 26 (MATGSHTTTLLLAVALLGLPWPQEAG) form the signal peptide. H46 serves as a coordination point for Zn(2+). Cysteines 79 and 190 form a disulfide. E199 provides a ligand contact to Zn(2+). An intrachain disulfide couples C207 to C215.

The protein belongs to the somatotropin/prolactin family.

The protein resides in the secreted. Plays an important role in growth control. Its major role in stimulating body growth is to stimulate the liver and other tissues to secrete IGF1. It stimulates both the differentiation and proliferation of myoblasts. It also stimulates amino acid uptake and protein synthesis in muscle and other tissues. The chain is Somatotropin (GH1) from Galago senegalensis (Northern lesser bushbaby).